Reading from the N-terminus, the 219-residue chain is Claudin-6 (219 aa).

The Cytoplasmic portion of the chain corresponds to 1–7 (MASTGLQ). Residues 8–28 (ILGIVLTLLGWVNALVSCALP) form a helical membrane-spanning segment. At 29–81 (MWKVTAFIGNSIVVAQMVWEGLWMSCVVQSTGQMQCKVYDSLLALPQDLQAAR) the chain is on the extracellular side. Residues 82-102 (ALCVVTLLIVLLGLLVYLAGA) traverse the membrane as a helical segment. At 103–116 (KCTTCVEDRNSKSR) the chain is on the cytoplasmic side. A helical membrane pass occupies residues 117–137 (LVLISGIIFVISGVLTLIPVC). Residues 138-163 (WTAHSIIQDFYNPLVADAQKRELGAS) are Extracellular-facing. Residues 164-184 (LYLGWAASGLLLLGGGLLCCA) form a helical membrane-spanning segment. Over 185 to 219 (CSSGGTQGPRHYMACYSTSVPHSRGPSEYPTKNYV) the chain is Cytoplasmic. 4 positions are modified to phosphoserine: serine 201, serine 203, serine 207, and serine 211. The interactions with TJP1, TJP2 and TJP3 stretch occupies residues 218–219 (YV).

This sequence belongs to the claudin family. Directly interacts with TJP1/ZO-1, TJP2/ZO-2 and TJP3/ZO-3. Interacts with CLDN1, CD81 and OCLN. In terms of tissue distribution, expressed mostly in embryonic tissues.

It is found in the cell junction. It localises to the tight junction. Its subcellular location is the cell membrane. Plays a major role in tight junction-specific obliteration of the intercellular space, through calcium-independent cell-adhesion activity. The sequence is that of Claudin-6 (Cldn6) from Mus musculus (Mouse).